We begin with the raw amino-acid sequence, 200 residues long: Small ribosomal subunit protein uS4c (200 aa).

Residues 88-148 (IRLDNTIFNL…PKSYYIFKLC (61 aa)) enclose the S4 RNA-binding domain.

This sequence belongs to the universal ribosomal protein uS4 family. Part of the 30S ribosomal subunit.

It localises to the plastid. The protein localises to the apicoplast. Functionally, one of the primary rRNA binding proteins, it binds directly to 16S rRNA where it nucleates assembly of the body of the 30S subunit. In Eimeria tenella (Coccidian parasite), this protein is Small ribosomal subunit protein uS4c (rps4).